Here is a 426-residue protein sequence, read N- to C-terminus: Glutamate-1-semialdehyde 2,1-aminomutase (426 aa).

Residue K265 is modified to N6-(pyridoxal phosphate)lysine.

Belongs to the class-III pyridoxal-phosphate-dependent aminotransferase family. HemL subfamily. As to quaternary structure, homodimer. The cofactor is pyridoxal 5'-phosphate.

The protein localises to the cytoplasm. The enzyme catalyses (S)-4-amino-5-oxopentanoate = 5-aminolevulinate. It functions in the pathway porphyrin-containing compound metabolism; protoporphyrin-IX biosynthesis; 5-aminolevulinate from L-glutamyl-tRNA(Glu): step 2/2. The chain is Glutamate-1-semialdehyde 2,1-aminomutase from Escherichia coli O139:H28 (strain E24377A / ETEC).